Consider the following 483-residue polypeptide: Cobyric acid synthase (483 aa).

One can recognise a GATase cobBQ-type domain in the interval 252–439 (KLKVVVPVLT…LHGFLDSEAV (188 aa)). The Nucleophile role is filled by C333. The active site involves H431.

This sequence belongs to the CobB/CobQ family. CobQ subfamily.

Its pathway is cofactor biosynthesis; adenosylcobalamin biosynthesis. Catalyzes amidations at positions B, D, E, and G on adenosylcobyrinic A,C-diamide. NH(2) groups are provided by glutamine, and one molecule of ATP is hydrogenolyzed for each amidation. The polypeptide is Cobyric acid synthase (Vibrio vulnificus (strain CMCP6)).